The following is a 1217-amino-acid chain: Splicing factor 3B subunit 3 (1217 aa).

2 interaction with PHF5A, SF3B1 and SF3B5 regions span residues 105-119 (ETFG…VPGQ) and 145-168 (NRDA…TLVY). Ser-156 carries the post-translational modification Phosphoserine. 2 interaction with SF3B1 and SF3B5 regions span residues 193-231 (DNDP…LEEH) and 786-804 (RKFV…ETDH). An interaction with SF3B1 region spans residues 1028–1049 (TYPRWVTTASLLDYDTVAGADK). An interaction with SF3B5 region spans residues 1100-1123 (TVLSLQKTTLIPGGSESLVYTTLS). Thr-1200 is modified (phosphothreonine).

The protein belongs to the RSE1 family. As to quaternary structure, component of the 17S U2 SnRNP complex, a ribonucleoprotein complex that contains small nuclear RNA (snRNA) U2 and a number of specific proteins. Part of the SF3B subcomplex of the 17S U2 SnRNP complex. SF3B associates with the splicing subcomplex SF3A and a 12S RNA unit to form the U2 small nuclear ribonucleoproteins complex (U2 snRNP). Within the SF3B subcomplex, interacts directly with SF3B1 (via HEAT domain), SF3B5 and PHF5A. Identified in the spliceosome A complex; remains associated with the spliceosome throughout the splicing process. Component of the spliceosome B complex. Identified in the spliceosome C complex. Identified in the spliceosome E complex. Component of the minor (U12-type spliceosome) spliceosome. Within this complex, interacts with SCNM1. Associates with the STAGA transcription coactivator-HAT complex. Interacts with SUPT3H. Interacts with TAF3.

It is found in the nucleus. Component of the 17S U2 SnRNP complex of the spliceosome, a large ribonucleoprotein complex that removes introns from transcribed pre-mRNAs. The 17S U2 SnRNP complex (1) directly participates in early spliceosome assembly and (2) mediates recognition of the intron branch site during pre-mRNA splicing by promoting the selection of the pre-mRNA branch-site adenosine, the nucleophile for the first step of splicing. Within the 17S U2 SnRNP complex, SF3B3 is part of the SF3B subcomplex, which is required for 'A' complex assembly formed by the stable binding of U2 snRNP to the branchpoint sequence in pre-mRNA. Sequence independent binding of SF3A and SF3B subcomplexes upstream of the branch site is essential, it may anchor U2 snRNP to the pre-mRNA. May also be involved in the assembly of the 'E' complex. Also acts as a component of the minor spliceosome, which is involved in the splicing of U12-type introns in pre-mRNAs. The polypeptide is Splicing factor 3B subunit 3 (SF3B3) (Pongo abelii (Sumatran orangutan)).